The chain runs to 325 residues: Melanocortin receptor 5 (325 aa).

The Extracellular portion of the chain corresponds to 1–37 (MNSSFHLHFLDLGLNTTDGNLSGLSVQNASSLCEDMG). N-linked (GlcNAc...) asparagine glycans are attached at residues N2, N15, N20, and N28. A helical membrane pass occupies residues 38 to 61 (IAVEVFLALGLISLLENILVIGAI). The Cytoplasmic segment spans residues 62-73 (VRNRNLHTPMYF). Residues 74 to 97 (FVGSLAVADMLVSLSNSWETITIY) traverse the membrane as a helical segment. Residues 98–114 (LLTNKHLVMADASVRHL) lie on the Extracellular side of the membrane. The helical transmembrane segment at 115-138 (DNVFDSMICISVVASMCSLLAIAV) threads the bilayer. Topologically, residues 139–155 (DRYVTIFCALRYQRIMT) are cytoplasmic. A helical membrane pass occupies residues 156-179 (GRRSGAIIGGIWAFCASCGTVFIV). The Extracellular portion of the chain corresponds to 180 to 186 (YYESTYV). Residues 187–211 (VICLIAMFLTMLLLMASLYTHMFLL) form a helical membrane-spanning segment. Over 212–239 (ARTHIRRIATLPGHSSVRQRTGVKGAIT) the chain is Cytoplasmic. The helical transmembrane segment at 240–265 (LAMLLGVFIVCWAPFFLHLILMISCP) threads the bilayer. At 266–273 (HNLYCSCF) the chain is on the extracellular side. The helical transmembrane segment at 274–297 (MSHFNMYLILIMCNSVIDPLIYAF) threads the bilayer. The Cytoplasmic portion of the chain corresponds to 298–325 (RSQEMRKTFKEIVCFQSFRTPCRFPSRY). C311 carries the S-palmitoyl cysteine lipid modification.

This sequence belongs to the G-protein coupled receptor 1 family.

The protein resides in the cell membrane. Receptor for MSH (alpha, beta and gamma) and ACTH. The activity of this receptor is mediated by G proteins which activate adenylate cyclase. This receptor is a possible mediator of the immunomodulation properties of melanocortins. The protein is Melanocortin receptor 5 (MC5R) of Bos taurus (Bovine).